The chain runs to 299 residues: Ribosomal protein L11 methyltransferase (299 aa).

S-adenosyl-L-methionine-binding residues include Thr140, Gly161, Asp183, and Asn232.

This sequence belongs to the methyltransferase superfamily. PrmA family.

The protein localises to the cytoplasm. It carries out the reaction L-lysyl-[protein] + 3 S-adenosyl-L-methionine = N(6),N(6),N(6)-trimethyl-L-lysyl-[protein] + 3 S-adenosyl-L-homocysteine + 3 H(+). Functionally, methylates ribosomal protein L11. The chain is Ribosomal protein L11 methyltransferase from Synechococcus elongatus (strain ATCC 33912 / PCC 7942 / FACHB-805) (Anacystis nidulans R2).